The primary structure comprises 290 residues: tRNA-cytidine(32) 2-sulfurtransferase (290 aa).

A PP-loop motif motif is present at residues 66–71 (SGGKDS). 3 residues coordinate [4Fe-4S] cluster: C141, C144, and C232.

It belongs to the TtcA family. As to quaternary structure, homodimer. Mg(2+) serves as cofactor. It depends on [4Fe-4S] cluster as a cofactor.

It localises to the cytoplasm. The catalysed reaction is cytidine(32) in tRNA + S-sulfanyl-L-cysteinyl-[cysteine desulfurase] + AH2 + ATP = 2-thiocytidine(32) in tRNA + L-cysteinyl-[cysteine desulfurase] + A + AMP + diphosphate + H(+). It functions in the pathway tRNA modification. Its function is as follows. Catalyzes the ATP-dependent 2-thiolation of cytidine in position 32 of tRNA, to form 2-thiocytidine (s(2)C32). The sulfur atoms are provided by the cysteine/cysteine desulfurase (IscS) system. The polypeptide is tRNA-cytidine(32) 2-sulfurtransferase (Rhizobium etli (strain ATCC 51251 / DSM 11541 / JCM 21823 / NBRC 15573 / CFN 42)).